The sequence spans 224 residues: Ribosomal RNA large subunit methyltransferase E (224 aa).

5 residues coordinate S-adenosyl-L-methionine: glycine 60, tryptophan 62, aspartate 93, aspartate 109, and aspartate 137. Lysine 177 (proton acceptor) is an active-site residue.

Belongs to the class I-like SAM-binding methyltransferase superfamily. RNA methyltransferase RlmE family.

The protein localises to the cytoplasm. The catalysed reaction is uridine(2552) in 23S rRNA + S-adenosyl-L-methionine = 2'-O-methyluridine(2552) in 23S rRNA + S-adenosyl-L-homocysteine + H(+). Its function is as follows. Specifically methylates the uridine in position 2552 of 23S rRNA at the 2'-O position of the ribose in the fully assembled 50S ribosomal subunit. The protein is Ribosomal RNA large subunit methyltransferase E of Polynucleobacter asymbioticus (strain DSM 18221 / CIP 109841 / QLW-P1DMWA-1) (Polynucleobacter necessarius subsp. asymbioticus).